The following is a 117-amino-acid chain: Hainantoxin-XV-5 (117 aa).

The N-terminal stretch at 1–20 (MKLCAVIIASLLVCVAVASS) is a signal peptide. The segment at 20–55 (SSDNQKEFAQEKEMTREETQSLGEHEKDDEVTGSEE) is disordered. The propeptide occupies 21-56 (SDNQKEFAQEKEMTREETQSLGEHEKDDEVTGSEER). A compositionally biased stretch (basic and acidic residues) spans 23 to 55 (NQKEFAQEKEMTREETQSLGEHEKDDEVTGSEE). Disulfide bonds link cysteine 58/cysteine 72, cysteine 65/cysteine 78, cysteine 69/cysteine 115, and cysteine 71/cysteine 91.

The protein belongs to the neurotoxin 03 (Tx2) family. 02 subfamily. HNTX-XV sub-subfamily. Expressed by the venom gland.

The protein resides in the secreted. Its function is as follows. Putative ion channel inhibitor. This chain is Hainantoxin-XV-5, found in Cyriopagopus hainanus (Chinese bird spider).